A 436-amino-acid polypeptide reads, in one-letter code: GTPase Der (436 aa).

EngA-type G domains lie at Pro-4–His-167 and Ile-176–Ala-351. GTP contacts are provided by residues Gly-10–Ser-17, Asp-57–Ile-61, Asn-119–Asp-122, Gly-182–Ser-189, Asp-229–Met-233, and Asn-294–Asp-297. The KH-like domain occupies Met-352–Lys-436.

The protein belongs to the TRAFAC class TrmE-Era-EngA-EngB-Septin-like GTPase superfamily. EngA (Der) GTPase family. As to quaternary structure, associates with the 50S ribosomal subunit.

In terms of biological role, GTPase that plays an essential role in the late steps of ribosome biogenesis. The polypeptide is GTPase Der (Geobacillus thermodenitrificans (strain NG80-2)).